We begin with the raw amino-acid sequence, 376 residues long: Thymidine kinase (376 aa).

The disordered stretch occupies residues 1-44; that stretch reads MASYPGHQHASAFDQAARSRGHSNRRTALRPRRQQEATEVRPEQ. The span at 19–32 shows a compositional bias: basic residues; that stretch reads SRGHSNRRTALRPR. A compositionally biased stretch (basic and acidic residues) spans 33-44; the sequence is RQQEATEVRPEQ. ATP is bound at residue 56 to 63; sequence GPHGMGKT. Glu-83 acts as the Proton acceptor in catalysis. Residues Tyr-101 and Gln-125 each coordinate substrate. Arg-216 is an ATP binding site. Arg-222 lines the substrate pocket. Residues 260–280 are disordered; sequence GQLSGTAVPPQGAEPQSNAGP.

This sequence belongs to the herpesviridae thymidine kinase family. Homodimer.

It catalyses the reaction thymidine + ATP = dTMP + ADP + H(+). Its function is as follows. Catalyzes the transfer of the gamma-phospho group of ATP to thymidine to generate dTMP in the salvage pathway of pyrimidine synthesis. The dTMP serves as a substrate for DNA polymerase during viral DNA replication. Allows the virus to be reactivated and to grow in non-proliferative cells lacking a high concentration of phosphorylated nucleic acid precursors. The polypeptide is Thymidine kinase (Human herpesvirus 1 (strain SC16) (HHV-1)).